The sequence spans 779 residues: Molybdenum cofactor sulfurase (779 aa).

Position 247 is an N6-(pyridoxal phosphate)lysine (Lys-247). Cys-409 is an active-site residue. In terms of domain architecture, MOSC spans 624–779 (SQSLGLEGVR…LTCGDVIVVS (156 aa)). The residue at position 732 (Ser-732) is a Phosphoserine.

This sequence belongs to the class-V pyridoxal-phosphate-dependent aminotransferase family. MOCOS subfamily. Pyridoxal 5'-phosphate is required as a cofactor.

It carries out the reaction Mo-molybdopterin + L-cysteine + AH2 = thio-Mo-molybdopterin + L-alanine + A + H2O. It participates in cofactor biosynthesis; molybdopterin biosynthesis. Sulfurates the molybdenum cofactor. Sulfation of molybdenum is essential for xanthine dehydrogenase (XDH) and aldehyde oxidase (ADO) enzymes in which molybdenum cofactor is liganded by 1 oxygen and 1 sulfur atom in active form. The polypeptide is Molybdenum cofactor sulfurase (Drosophila mojavensis (Fruit fly)).